Consider the following 166-residue polypeptide: MSQTPREATPAQQSRRAARELAVQGLYQWQMTGKSITAVESEFRAQIADEDLEDHENWHKVMGIADLALFHELLHNVAADREAIDKTIAPLLDRRLEDLDRIELAILRLGAYELKYRLEVPYRAVINEGIELAKAFGATDGHKYVNGILDKLASRLRSAEVAARRR.

It belongs to the NusB family.

Functionally, involved in transcription antitermination. Required for transcription of ribosomal RNA (rRNA) genes. Binds specifically to the boxA antiterminator sequence of the ribosomal RNA (rrn) operons. This chain is Transcription antitermination protein NusB, found in Chromohalobacter salexigens (strain ATCC BAA-138 / DSM 3043 / CIP 106854 / NCIMB 13768 / 1H11).